We begin with the raw amino-acid sequence, 297 residues long: MLSVLSYGRLVARAVIGGLSQTDSRDYSLVSASFGFGKDFRKGILKKGMCYGDDACFIARHRSADVLGVADGVGGWRDYGVDPSQFSGTLMRTCERLVKEGRFVPSNPVGILTTSYYELLQNKVPLLGSSTACIVVLDRQSHRLHTANLGDSGFLVVRGGEVVHRSDEQQHYFNTPFQLSIAPPEAEGSVLSDSPDAADSSSFDVQLGDIILTATDGLFDNMPDYMILQELKKLKNTNYESTQQTAKSIAEQAHVLAYDPNYMSPFAQFACDNGLNVRGGKPDDITVLLSIVAEYTD.

The N-terminal 27 residues, 1 to 27 (MLSVLSYGRLVARAVIGGLSQTDSRDY), are a transit peptide targeting the mitochondrion. In terms of domain architecture, PPM-type phosphatase spans 28-292 (SLVSASFGFG…DDITVLLSIV (265 aa)). 3 residues coordinate Mn(2+): aspartate 71, glycine 72, and aspartate 216.

It belongs to the PP2C family. Mg(2+) serves as cofactor. It depends on Mn(2+) as a cofactor.

Its subcellular location is the mitochondrion matrix. The enzyme catalyses O-phospho-L-seryl-[protein] + H2O = L-seryl-[protein] + phosphate. It catalyses the reaction O-phospho-L-threonyl-[protein] + H2O = L-threonyl-[protein] + phosphate. Functionally, protein phosphatase which positively regulates biosynthesis of the ubiquinone, coenzyme Q. Dephosphorylates the ubiquinone biosynthesis protein coq7 which is likely to lead to its activation. The polypeptide is Protein phosphatase PTC7 homolog (pptc7) (Danio rerio (Zebrafish)).